We begin with the raw amino-acid sequence, 495 residues long: Cobyric acid synthase (495 aa).

Residues 249–443 (EININVIRLP…LHGLFDNGAW (195 aa)) form the GATase cobBQ-type domain. Residue Cys-330 is the Nucleophile of the active site. The active site involves His-435.

Belongs to the CobB/CobQ family. CobQ subfamily.

The protein operates within cofactor biosynthesis; adenosylcobalamin biosynthesis. Functionally, catalyzes amidations at positions B, D, E, and G on adenosylcobyrinic A,C-diamide. NH(2) groups are provided by glutamine, and one molecule of ATP is hydrogenolyzed for each amidation. In Gloeothece citriformis (strain PCC 7424) (Cyanothece sp. (strain PCC 7424)), this protein is Cobyric acid synthase.